A 1118-amino-acid polypeptide reads, in one-letter code: Constitutive coactivator of PPAR-gamma-like protein 1 (1118 aa).

An interaction with YES1, SRC and FYN region spans residues 339 to 405; it reads PPHYLAARPG…SLSEPAPLTL (67 aa). Residues 374–533 form a disordered region; that stretch reads AKPVAPQVPS…GTVQPIPCLL (160 aa). The segment covering 376-396 has biased composition (low complexity); that stretch reads PVAPQVPSPGGAPGQGPYPYS. Composition is skewed to polar residues over residues 405 to 420 and 435 to 447; these read LDTSGKNLTEQNSYSN and SPINPAQSGSPNH. Positions 481-502 are enriched in basic and acidic residues; the sequence is GWEKTGSHSEPQARGDPGDQTK. Positions 503–514 are enriched in polar residues; the sequence is AEGSSTASSGSQ. Residue threonine 655 is modified to Phosphothreonine. An RNA binding region spans residues 829-1118; the sequence is ADQAAKVEKM…LEAAVLNKEE (290 aa). Omega-N-methylarginine is present on residues arginine 873, arginine 884, and arginine 886. A disordered region spans residues 921–945; sequence AFSGSDSSRTSKSQGGVQPIPSQGG. The segment covering 924-936 has biased composition (polar residues); the sequence is GSDSSRTSKSQGG. Residue lysine 932 is modified to N6-acetyllysine. At serine 960 the chain carries Phosphoserine. Residues arginine 982 and arginine 986 each carry the omega-N-methylarginine modification. The residue at position 1023 (serine 1023) is a Phosphoserine. The interval 1025–1102 is disordered; it reads EEVAKELKSK…HLNALSTDSA (78 aa). The segment covering 1026-1037 has biased composition (basic and acidic residues); it reads EVAKELKSKSGE. Positions 1038–1051 are enriched in low complexity; sequence SKSSAMSSDGSLAE. 3 positions are modified to phosphoserine: serine 1044, serine 1045, and serine 1048. Residues 1076 to 1101 are compositionally biased toward polar residues; sequence HSESALNNDSKTCNTNPHLNALSTDS.

It belongs to the constitutive coactivator of PPAR-gamma family. As to quaternary structure, interacts with PURA. Interacts with SRC family protein kinases YES1, SRC and FYN. Upon tyrosine phosphorylation, interacts with PIK3R1. Interacts with IGF2BP1/IMP-1 in an RNA-dependent manner. Arg-982 is dimethylated, probably to asymmetric dimethylarginine. Post-translationally, phosphorylated on tyrosine by SRC family protein kinases upon oxidative stress, for instance following UV irradiation. In terms of tissue distribution, widely expressed. In gastric mucosa, detected in the bottom region of the foveolar epithelium (at protein level).

The protein localises to the cytoplasm. The protein resides in the cell membrane. Component of the oxidative stress-induced survival signaling. May regulate the activation of SRC family protein kinases. May act as a scaffolding protein enabling SRC family protein kinases to phosphorylate and activate PI3-kinase. Binds IGF2 RNA and promotes the production of IGF2 protein. The chain is Constitutive coactivator of PPAR-gamma-like protein 1 (FAM120A) from Homo sapiens (Human).